We begin with the raw amino-acid sequence, 76 residues long: Putative cation transport regulator ChaB (76 aa).

This sequence belongs to the ChaB family. In terms of assembly, monomer.

In terms of biological role, might be a regulator of the sodium-potassium/proton antiporter ChaA. In Escherichia coli O157:H7, this protein is Putative cation transport regulator ChaB.